The following is a 567-amino-acid chain: MSDDIRNLVYKYALHNAYTHNGKANVNAVVSKIFAERPELRSKAKDIVEIAKELVNYVNSLDVESQKKELESKFPEMLEEKKREKESKKELPDIPVSGVLVTRFAPNPDGPLHLGNARAAIISHEYARIYNGKFILRFDDTDPKTKKPIPEAYDWIKEDLKWLGIKWDLEVRASARLETYYNFARILLSKGYAYIDLCKEAEFKERRSKREACPHRETSPESNLELFEKMIHGEFEEGKAVVRLKTDLKLPDPSQRDWVLLRVINVKKSPHPIEGDKYWVWPTYNFASAIDDYDLGVTHIFRGKEHAVNAEKQKWIYNYMGWKYPYVREFGRLKLEGFMMSKSKIRTVVEKGVGIDDPRLPTLAGLRRRGILSDTIKEIIITVGLKETDATISFDNLASTNRKKLDKIAKRLMFVGSPKEFIIDIPQPILAKIPYHPSNPNEYREISVNPGDIILINENDAKDKVLRLMELCNVTVNGDKLVYNSKGIEDAKKLGMKIIQWVKKDESVPVVVLSPDPEKGIETINGVGESEIRNLNKGEIVQFIRYGFVKVDEKSADGQVTVIFSHE.

Positions 106 to 116 match the 'HIGH' region motif; it reads PNPDGPLHLGN.

The protein belongs to the class-I aminoacyl-tRNA synthetase family. Glutamate--tRNA ligase type 2 subfamily.

Its subcellular location is the cytoplasm. It catalyses the reaction tRNA(Glu) + L-glutamate + ATP = L-glutamyl-tRNA(Glu) + AMP + diphosphate. Catalyzes the attachment of glutamate to tRNA(Glu) in a two-step reaction: glutamate is first activated by ATP to form Glu-AMP and then transferred to the acceptor end of tRNA(Glu). This chain is Glutamate--tRNA ligase, found in Sulfolobus acidocaldarius (strain ATCC 33909 / DSM 639 / JCM 8929 / NBRC 15157 / NCIMB 11770).